A 309-amino-acid chain; its full sequence is Olfactory receptor 14A16 (309 aa).

The Extracellular portion of the chain corresponds to 1 to 23 (MANLTIVTEFILMGFSTNKNMCI). A glycan (N-linked (GlcNAc...) asparagine) is linked at asparagine 3. The helical transmembrane segment at 24–44 (LHSILFLLIYLCALMGNVLII) threads the bilayer. Residues 45-52 (MITTLDHH) lie on the Cytoplasmic side of the membrane. A helical transmembrane segment spans residues 53-73 (LHTPVYFFLKNLSFLDLCLIS). Residues 74-97 (VTAPKSIANSLIHNNSISFLGCVS) lie on the Extracellular side of the membrane. A glycan (N-linked (GlcNAc...) asparagine) is linked at asparagine 87. Cysteine 95 and cysteine 187 are joined by a disulfide. A helical membrane pass occupies residues 98 to 118 (QVFLLLSSASAELLLLTVMSF). Over 119-131 (DRYTAICHPLHYD) the chain is Cytoplasmic. A helical membrane pass occupies residues 132-152 (VIMDRSTCVQRATVSWLYGGL). Residues 153-194 (IAVMHTAGTFSLSYCGSNMVHQFFCDIPQLLAISCSENLIRE) lie on the Extracellular side of the membrane. Residues 195–215 (IALILINVVLDFCCFIVIIIT) traverse the membrane as a helical segment. Topologically, residues 216-235 (YVHVFSTVKKIPSTEGQSKA) are cytoplasmic. A helical membrane pass occupies residues 236–255 (YSICLPHLLVVLFLSTGFIA). Residues 256 to 268 (YLKPASESPSILD) lie on the Extracellular side of the membrane. The helical transmembrane segment at 269–289 (AVISVFYTMLPPTFNPIIYSL) threads the bilayer. At 290 to 309 (RNKAIKVALGMLIKGKLTKK) the chain is on the cytoplasmic side.

Belongs to the G-protein coupled receptor 1 family.

The protein resides in the cell membrane. Its function is as follows. Odorant receptor. The chain is Olfactory receptor 14A16 (OR14A16) from Homo sapiens (Human).